Reading from the N-terminus, the 397-residue chain is Metal tolerance protein 4 (397 aa).

Over residues 1 to 19 (MEAKGENDARAPLLAERRR) the composition is skewed to basic and acidic residues. The disordered stretch occupies residues 1–27 (MEAKGENDARAPLLAERRRNSVGSMRG). Residues 1–104 (MEAKGENDAR…EQKQSEFAMK (104 aa)) lie on the Cytoplasmic side of the membrane. The helical transmembrane segment at 105–122 (ISNYANMILLALKIYATI) threads the bilayer. Topologically, residues 123–126 (KSGS) are vacuolar. A helical membrane pass occupies residues 127 to 147 (IAIAASTLDSLLDLMAGGILW). Residues 148–170 (FTHLSMKSINVYKYPIGKLRVQP) are Cytoplasmic-facing. A helical membrane pass occupies residues 171–191 (VGIIIFAAVMATLGFQVFVQA). The Vacuolar segment spans residues 192–208 (VEKLIVNETPDKLTPVQ). The chain crosses the membrane as a helical span at residues 209–229 (LTWLYSIMIFATVVKLALWLY). Residues 230 to 248 (CRTSGNKIVRAYAKDHYFD) are Cytoplasmic-facing. A helical transmembrane segment spans residues 249 to 269 (VVTNVVGLAAAVLGDMFYWWI). Position 270 (Asp270) is a topological domain, vacuolar. A helical transmembrane segment spans residues 271-291 (PVGAIALAVYTITNWSGTVWE). Residues 292-397 (NAVSLVGESA…ILSKLPSSQP (106 aa)) are Cytoplasmic-facing.

It belongs to the cation diffusion facilitator (CDF) transporter (TC 2.A.4) family. SLC30A subfamily.

It localises to the vacuole membrane. In terms of biological role, involved in sequestration of excess metal in the cytoplasm into vacuoles to maintain metal homeostasis. The protein is Metal tolerance protein 4 (MTP4) of Oryza sativa subsp. japonica (Rice).